A 196-amino-acid chain; its full sequence is dTTP/UTP pyrophosphatase (196 aa).

Catalysis depends on aspartate 77, which acts as the Proton acceptor.

Belongs to the Maf family. YhdE subfamily. The cofactor is a divalent metal cation.

The protein localises to the cytoplasm. The catalysed reaction is dTTP + H2O = dTMP + diphosphate + H(+). It carries out the reaction UTP + H2O = UMP + diphosphate + H(+). Its function is as follows. Nucleoside triphosphate pyrophosphatase that hydrolyzes dTTP and UTP. May have a dual role in cell division arrest and in preventing the incorporation of modified nucleotides into cellular nucleic acids. This is dTTP/UTP pyrophosphatase from Christiangramia forsetii (strain DSM 17595 / CGMCC 1.15422 / KT0803) (Gramella forsetii).